The following is a 378-amino-acid chain: Tafazzin (378 aa).

Residues 1–137 are Mitochondrial intermembrane-facing; that stretch reads MFMVVCSNLR…RLRNPSKFWY (137 aa). A disordered region spans residues 46–112; the sequence is APEARPVPDE…DQDADPSLDV (67 aa). Residues 51 to 67 show a composition bias toward basic and acidic residues; the sequence is PVPDERYPGSQQDRKDI. The stretch at 138-158 is an intramembrane region; sequence VVSQFVVSAVGIFSKVVLMFL. The Mitochondrial intermembrane portion of the chain corresponds to 159–378; that stretch reads NKPRVYNRER…ETEKLHRERN (220 aa). The short motif at 188–193 is the HXXXXD motif element; sequence HYSCFD.

The protein belongs to the taffazin family. In terms of assembly, associates with multiple protein complexes. Association with large protein complexes occurs only in the presence of cardiolipin.

It is found in the mitochondrion outer membrane. It localises to the mitochondrion inner membrane. Its subcellular location is the mitochondrion. The protein localises to the mitochondrion membrane. The protein resides in the golgi apparatus membrane. It is found in the endoplasmic reticulum membrane. The enzyme catalyses 1'-[1,2-diacyl-sn-glycero-3-phospho],3'-[1-acyl-sn-glycero-3-phospho]-glycerol + a 1,2-diacyl-sn-glycero-3-phosphocholine = a cardiolipin + a 1-acyl-sn-glycero-3-phosphocholine. The catalysed reaction is 1'-[1,2-di-(9Z,12Z-octadecadienoyl)-sn-glycero-3-phospho]-3'-[1-(9Z,12Z-octadecadienoyl)-sn-glycero-3-phospho]-glycerol + 1-hexadecanoyl-2-(9Z,12Z-octadecadienoyl)-sn-glycero-3-phosphocholine = 1',3'-bis-[1,2-di-(9Z,12Z-octadecadienoyl)-sn-glycero-3-phospho]-glycerol + 1-hexadecanoyl-sn-glycero-3-phosphocholine. It carries out the reaction 1'-[1,2-di-(9Z,12Z-octadecadienoyl)-sn-glycero-3-phospho]-3'-[2-(9Z,12Z-octadecadienoyl)-sn-glycero-3-phospho]-glycerol + 1-hexadecanoyl-2-(9Z,12Z-octadecadienoyl)-sn-glycero-3-phosphocholine = 1',3'-bis-[1,2-di-(9Z,12Z-octadecadienoyl)-sn-glycero-3-phospho]-glycerol + 1-hexadecanoyl-sn-glycero-3-phosphocholine. It catalyses the reaction 1,2-di-(9Z,12Z-octadecadienoyl)-sn-glycero-3-phosphocholine + 1'-[1,2-di-(9Z,12Z-octadecadienoyl)-sn-glycero-3-phospho]-3'-[1-(9Z,12Z-octadecadienoyl)-sn-glycero-3-phospho]-glycerol = 1-(9Z,12Z)-octadecadienoyl-sn-glycero-3-phosphocholine + 1',3'-bis-[1,2-di-(9Z,12Z-octadecadienoyl)-sn-glycero-3-phospho]-glycerol. The enzyme catalyses 1-tetradecanoyl-sn-glycero-3-phosphocholine + 1',3'-bis-[1,2-di-(9Z,12Z-octadecadienoyl)-sn-glycero-3-phospho]-glycerol = 1-tetradecanoyl-2-(9Z,12Z-octadecadienoyl)-sn-glycero-3-phosphocholine + 1'-[1,2-di-(9Z,12Z-octadecadienoyl)-sn-glycero-3-phospho]-3'-[1-(9Z,12Z-octadecadienoyl)-sn-glycero-3-phospho]-glycerol. The catalysed reaction is 1',3'-bis[1,2-di-(9Z-octadecenoyl)-sn-glycero-3-phospho]-glycerol + 1-nonadecanoyl-sn-glycero-3-phosphocholine = 1-nonadecanoyl-2-(9Z-octadecenoyl)-sn-glycero-3-phosphocholine + 1'-[1,2-di-(9Z-octadecenoyl)-sn-glycero-3-phospho]-3'-[1-(9Z-octadecenoyl)-sn-glycero-3-phospho]-glycerol. It carries out the reaction a 1,2-diacyl-sn-glycero-3-phospho-(1'-sn-glycerol) + a 1-acyl-sn-glycero-3-phosphocholine = 1-acyl-sn-glycero-3-phospho-(1'-sn-glycerol) + a 1,2-diacyl-sn-glycero-3-phosphocholine. It catalyses the reaction 1-hexadecanoyl-2-(9Z,12Z-octadecadienoyl)-sn-glycero-3-phospho-(1'-sn-glycerol) + 1-hexadecanoyl-sn-glycero-3-phosphocholine = 1-hexadecanoyl-sn-glycero-3-phospho-(1'-sn-glycerol) + 1-hexadecanoyl-2-(9Z,12Z-octadecadienoyl)-sn-glycero-3-phosphocholine. The enzyme catalyses 1,2-di-(9Z-octadecenoyl)-sn-glycero-3-phospho-(1'-sn-glycerol) + 1-nonadecanoyl-sn-glycero-3-phosphocholine = 1-nonadecanoyl-2-(9Z-octadecenoyl)-sn-glycero-3-phosphocholine + 1-(9Z-octadecenoyl)-sn-glycero-3-phospho-(1'-sn-glycerol). The catalysed reaction is a 1,2-diacyl-sn-glycero-3-phosphate + a 1-acyl-sn-glycero-3-phosphocholine = a 1-acyl-sn-glycero-3-phosphate + a 1,2-diacyl-sn-glycero-3-phosphocholine. It carries out the reaction 1-hexadecanoyl-2-(9Z,12Z-octadecadienoyl)-sn-glycero-3-phosphate + 1-hexadecanoyl-sn-glycero-3-phosphocholine = 1-hexadecanoyl-2-(9Z,12Z-octadecadienoyl)-sn-glycero-3-phosphocholine + 1-hexadecanoyl-sn-glycero-3-phosphate. It catalyses the reaction 1-hexadecanoyl-2-(9Z,12Z-octadecadienoyl)-sn-glycero-3-phosphocholine + 1-(9Z-octadecenoyl)-sn-glycero-3-phosphate = 1-(9Z)-octadecenoyl-2-(9Z,12Z)-octadecadienoyl-sn-glycero-3-phosphate + 1-hexadecanoyl-sn-glycero-3-phosphocholine. The enzyme catalyses a 1-acyl-sn-glycero-3-phosphocholine + a 1,2-diacyl-sn-glycero-3-phosphoethanolamine = a 1-acyl-sn-glycero-3-phosphoethanolamine + a 1,2-diacyl-sn-glycero-3-phosphocholine. The catalysed reaction is 1-hexadecanoyl-2-(9Z,12Z-octadecadienoyl)-sn-glycero-3-phosphoethanolamine + 1-hexadecanoyl-sn-glycero-3-phosphocholine = 1-hexadecanoyl-2-(9Z,12Z-octadecadienoyl)-sn-glycero-3-phosphocholine + 1-hexadecanoyl-sn-glycero-3-phosphoethanolamine. It carries out the reaction 1,2-di-(9Z,12Z-octadecadienoyl)-sn-glycero-3-phosphoethanolamine + 1-tetradecanoyl-sn-glycero-3-phosphocholine = 1-(9Z,12Z-octadecadienoyl)-sn-glycero-3-phosphoethanolamine + 1-tetradecanoyl-2-(9Z,12Z-octadecadienoyl)-sn-glycero-3-phosphocholine. It catalyses the reaction 1'-[1,2-diacyl-sn-glycero-3-phospho],3'-[1-acyl-sn-glycero-3-phospho]-glycerol + a 1,2-diacyl-sn-glycero-3-phosphoethanolamine = a cardiolipin + a 1-acyl-sn-glycero-3-phosphoethanolamine. The enzyme catalyses 1-hexadecanoyl-2-(9Z,12Z-octadecadienoyl)-sn-glycero-3-phosphoethanolamine + 1'-[1,2-di-(9Z,12Z-octadecadienoyl)-sn-glycero-3-phospho]-3'-[1-(9Z,12Z-octadecadienoyl)-sn-glycero-3-phospho]-glycerol = 1',3'-bis-[1,2-di-(9Z,12Z-octadecadienoyl)-sn-glycero-3-phospho]-glycerol + 1-hexadecanoyl-sn-glycero-3-phosphoethanolamine. The catalysed reaction is 1'-[1-(9Z,12Z-octadecadienoyl)-2-(9Z-octadecenoyl)-sn-glycero-3-phospho]-3'-[1-(9Z,12Z-octadecadienoyl)-sn-glycero-3-phospho]-glycerol + 1',3'-bis-[1,2-di-(9Z,12Z-octadecadienoyl)-sn-glycero-3-phospho]-glycerol = 1'-[1,2-di-(9Z,12Z-octadecadienoyl)-sn-glycero-3-phospho]-3'-[1-(9Z,12Z-octadecadienoyl)-2-(9Z-octadecenoyl)-sn-glycero-3-phospho]-glycerol + 1'-[1,2-di-(9Z,12Z-octadecadienoyl)-sn-glycero-3-phospho]-3'-[1-(9Z,12Z-octadecadienoyl)-sn-glycero-3-phospho]-glycerol. It carries out the reaction 1,2-di-(9Z-hexadecenoyl)-sn-glycero-3-phosphocholine + 1-hexadecanoyl-sn-glycero-3-phosphocholine = 1-hexadecanoyl-2-(9Z-hexadecenoyl)-sn-glycero-3-phosphocholine + 1-(9Z-hexadecenoyl)-sn-glycero-3-phosphocholine. It catalyses the reaction 1,2-dioctadecanoyl-sn-glycero-3-phosphocholine + 1-hexadecanoyl-sn-glycero-3-phosphocholine = 1-hexadecanoyl-2-octadecanoyl-sn-glycero-3-phosphocholine + 1-octadecanoyl-sn-glycero-3-phosphocholine. The enzyme catalyses 1,2-di-(9Z-octadecenoyl)-sn-glycero-3-phosphocholine + 1-hexadecanoyl-sn-glycero-3-phosphocholine = 1-hexadecanoyl-2-(9Z-octadecenoyl)-sn-glycero-3-phosphocholine + 1-(9Z-octadecenoyl)-sn-glycero-3-phosphocholine. The catalysed reaction is 1,2-di-(9Z,12Z-octadecadienoyl)-sn-glycero-3-phosphocholine + 1-(9Z-octadecenoyl)-sn-glycero-3-phosphocholine = 1-(9Z)-octadecenoyl-2-(9Z,12Z)-octadecadienoyl-sn-glycero-3-phosphocholine + 1-(9Z,12Z)-octadecadienoyl-sn-glycero-3-phosphocholine. It carries out the reaction 1,2-di-(9Z,12Z,15Z-octadecatrienoyl)-sn-glycero-3-phosphocholine + 1-tetradecanoyl-sn-glycero-3-phosphocholine = 1-tetradecanoyl-2-(9Z,12Z,15Z-octadecatrienoyl)-sn-glycero-3-phosphocholine + 1-(9Z,12Z,15Z-octadecatrienoyl)-sn-glycero-3-phosphocholine. It catalyses the reaction 1-nonadecanoyl-sn-glycero-3-phosphocholine + 1-octadecanoyl-2-(9Z-octadecenoyl)-sn-glycero-3-phosphocholine = 1-nonadecanoyl-2-(9Z-octadecenoyl)-sn-glycero-3-phosphocholine + 1-octadecanoyl-sn-glycero-3-phosphocholine. The enzyme catalyses 1-(9Z)-octadecenoyl-2-octadecanoyl-sn-glycero-3-phosphocholine + 1-nonadecanoyl-sn-glycero-3-phosphocholine = 2-octadecanoyl-sn-glycero-3-phosphocholine + 1-nonadecanoyl-2-(9Z-octadecenoyl)-sn-glycero-3-phosphocholine. The protein operates within phospholipid metabolism. In terms of biological role, acyltransferase required to remodel newly synthesized phospholipid cardiolipin (1',3'-bis-[1,2-diacyl-sn-glycero-3-phospho]-glycerol or CL), a key component of the mitochondrial inner membrane, with tissue specific acyl chains necessary for adequate mitochondrial function. Its role in cellular physiology is to improve mitochondrial performance. CL is critical for the coassembly of lipids and proteins in mitochondrial membranes. For instance, remodeling of the acyl groups of CL in the mitochondrial inner membrane affects the assembly and stability of respiratory chain complex IV and its supercomplex forms. Catalyzes the transacylation between phospholipids and lysophospholipids, with the highest rate being between phosphatidylcholine (1,2-diacyl-sn-glycero-3-phosphocholine or PC) and CL. Catalyzes both 1-acyl-sn-glycero-3-phosphocholine (lysophosphatidylcholine or LPC) reacylation and PC-CL transacylation, that means, it exchanges acyl groups between CL and PC by a combination of forward and reverse transacylations. Also catalyzes transacylations between other phospholipids such as phosphatidylethanolamine (1,2-diacyl-sn-glycero-3-phosphoethanolamine or PE) and CL, between PC and PE, and between PC and phosphatidate (1,2-diacyl-sn-glycero-3-phosphate or PA), although at lower rate. Not regiospecific, it transfers acyl groups into any of the sn-1 and sn-2 positions of the monolysocardiolipin (MLCL), which is an important prerequisite for uniformity and symmetry in CL acyl distribution. Cannot transacylate dilysocardiolipin (DLCL), thus, the role of MLCL is limited to that of an acyl acceptor. CoA-independent, it can reshuffle molecular species within a single phospholipid class. Redistributes fatty acids between MLCL, CL, and other lipids, which prolongs the half-life of CL. Its action is completely reversible, which allows for cyclic changes, such as fission and fusion or bending and flattening of the membrane. Hence, by contributing to the flexibility of the lipid composition, it plays an important role in the dynamics of mitochondria membranes. Essential for the final stage of spermatogenesis, spermatid individualization. Required for the initiation of mitophagy. The polypeptide is Tafazzin (Drosophila melanogaster (Fruit fly)).